We begin with the raw amino-acid sequence, 311 residues long: Tryptophan 2,3-dioxygenase (311 aa).

A disordered region spans residues 1 to 37; that stretch reads MQPPGGDAPAGCPFSGARAAQPAQAAHEAPHVPGEAD. Over residues 17–27 the composition is skewed to low complexity; the sequence is ARAAQPAQAAH. Residues 80 to 84, Y142, and R146 each bind substrate; that span reads FIIQH. A heme-binding site is contributed by H269. Substrate is bound at residue T283.

It belongs to the tryptophan 2,3-dioxygenase family. As to quaternary structure, homotetramer. Heme serves as cofactor.

It carries out the reaction L-tryptophan + O2 = N-formyl-L-kynurenine. It participates in amino-acid degradation; L-tryptophan degradation via kynurenine pathway; L-kynurenine from L-tryptophan: step 1/2. Functionally, heme-dependent dioxygenase that catalyzes the oxidative cleavage of the L-tryptophan (L-Trp) pyrrole ring and converts L-tryptophan to N-formyl-L-kynurenine. Catalyzes the oxidative cleavage of the indole moiety. The protein is Tryptophan 2,3-dioxygenase of Burkholderia orbicola (strain MC0-3).